The chain runs to 467 residues: Glutamate--tRNA ligase (467 aa).

Residues 13-23 (PSPTGYLHVGG) carry the 'HIGH' region motif. The short motif at 245–249 (KLSKR) is the 'KMSKS' region element. Lys-248 is a binding site for ATP.

This sequence belongs to the class-I aminoacyl-tRNA synthetase family. Glutamate--tRNA ligase type 1 subfamily. In terms of assembly, monomer.

It localises to the cytoplasm. It carries out the reaction tRNA(Glu) + L-glutamate + ATP = L-glutamyl-tRNA(Glu) + AMP + diphosphate. In terms of biological role, catalyzes the attachment of glutamate to tRNA(Glu) in a two-step reaction: glutamate is first activated by ATP to form Glu-AMP and then transferred to the acceptor end of tRNA(Glu). This chain is Glutamate--tRNA ligase, found in Herminiimonas arsenicoxydans.